The primary structure comprises 354 residues: Guanine nucleotide-binding protein G(i) subunit alpha-3 (354 aa).

Gly-2 carries N-myristoyl glycine lipidation. A lipid anchor (S-palmitoyl cysteine) is attached at Cys-3. One can recognise a G-alpha domain in the interval 32–354; it reads KEVKLLLLGA…KNNLKECGLY (323 aa). The interval 35–48 is G1 motif; the sequence is KLLLLGAGESGKST. GTP is bound by residues Gly-42, Glu-43, Ser-44, Gly-45, Lys-46, Ser-47, Thr-48, Asp-150, Ser-151, Leu-175, Arg-176, Thr-177, Arg-178, Val-179, Lys-180, Thr-181, Val-201, Gly-203, Asn-269, Lys-270, Asp-272, Leu-273, Cys-325, Ala-326, and Thr-327. Ser-47 is a Mg(2+) binding site. The G2 motif stretch occupies residues 173 to 181; that stretch reads DVLRTRVKT. Thr-181 serves as a coordination point for Mg(2+). The tract at residues 196-205 is G3 motif; the sequence is FKMFDVGGQR. Residues 265–272 are G4 motif; it reads ILFLNKKD. The segment at 324-329 is G5 motif; the sequence is TCATDT.

Belongs to the G-alpha family. G(i/o/t/z) subfamily. Heterotrimeric G proteins are composed of 3 units; alpha, beta and gamma. The alpha subunit contains the guanine nucleotide binding site. GTP binding causes dissociation of the heterotrimer, liberating the individual subunits so that they can interact with downstream effector proteins. Forms a complex with CCDC88A/GIV and EGFR which leads to enhanced EGFR signaling and triggering of cell migration; ligand stimulation is required for recruitment of GNAI3 to the complex. Interacts (inactive GDP-bound form) with CCDC88A/GIV (via GBA motif); the interaction leads to activation of GNAI3. Interacts (inactive GDP-bound form) with CCDC88C/DAPLE (via GBA motif); the interaction leads to activation of GNAI3. Interacts (inactive GDP-bound form) with NUCB1 (via GBA motif) and NUCB2 (via GBA motif); the interaction leads to activation of GNAI3. Interacts (inactive GDP-bound form) with PLCD4 (via GBA motif); the interaction leads to activation of GNAI3. Interacts with INSR; the interaction is probably mediated by CCDC88A/GIV. Interacts with GPSM1. Interacts (GDP-bound form) with GPSM2 (via GoLoco domains). Does not interact with RGS2. Interacts with RGS8 and RGS10; this strongly enhances the intrinsic GTPase activity. Interacts with RGS16; this strongly enhances the intrinsic GTPase activity. Interacts with RGS12. Interacts (via active GTP- or inactive GDP-bound form) with RGS14. Interacts (via active GTP-bound form) with TRPC5 (via ANK repeats) in a homotetrameric ion channel; the interaction is direct and activates the channel activity. In terms of tissue distribution, ubiquitously expressed.

It localises to the cytoplasm. Its subcellular location is the cell membrane. The protein localises to the cytoskeleton. It is found in the microtubule organizing center. The protein resides in the centrosome. Its function is as follows. Heterotrimeric guanine nucleotide-binding proteins (G proteins) function as transducers downstream of G protein-coupled receptors (GPCRs) in numerous signaling cascades. The alpha chain contains the guanine nucleotide binding site and alternates between an active, GTP-bound state and an inactive, GDP-bound state. Signaling by an activated GPCR promotes GDP release and GTP binding. The alpha subunit has a low GTPase activity that converts bound GTP to GDP, thereby terminating the signal. Both GDP release and GTP hydrolysis are modulated by numerous regulatory proteins. Signaling is mediated via effector proteins, such as adenylate cyclase. Inhibits adenylate cyclase activity, leading to decreased intracellular cAMP levels. Stimulates the activity of receptor-regulated K(+) channels. The active GTP-bound form prevents the association of RGS14 with centrosomes and is required for the translocation of RGS14 from the cytoplasm to the plasma membrane. May play a role in cell division. The active GTP-bound form activates the calcium permeant TRPC5 ion channels. The protein is Guanine nucleotide-binding protein G(i) subunit alpha-3 (GNAI3) of Cavia porcellus (Guinea pig).